A 449-amino-acid polypeptide reads, in one-letter code: Glutamyl-tRNA(Gln) amidotransferase subunit A (449 aa).

Catalysis depends on charge relay system residues K51 and S126. The tract at residues 103–128 (STTESSAHGKTLNPVDSSRVPGGSSG) is disordered. The segment covering 119-128 (SSRVPGGSSG) has biased composition (low complexity). S150 (acyl-ester intermediate) is an active-site residue.

It belongs to the amidase family. GatA subfamily. As to quaternary structure, heterotrimer of A, B and C subunits.

The enzyme catalyses L-glutamyl-tRNA(Gln) + L-glutamine + ATP + H2O = L-glutaminyl-tRNA(Gln) + L-glutamate + ADP + phosphate + H(+). In terms of biological role, allows the formation of correctly charged Gln-tRNA(Gln) through the transamidation of misacylated Glu-tRNA(Gln) in organisms which lack glutaminyl-tRNA synthetase. The reaction takes place in the presence of glutamine and ATP through an activated gamma-phospho-Glu-tRNA(Gln). This chain is Glutamyl-tRNA(Gln) amidotransferase subunit A, found in Wolinella succinogenes (strain ATCC 29543 / DSM 1740 / CCUG 13145 / JCM 31913 / LMG 7466 / NCTC 11488 / FDC 602W) (Vibrio succinogenes).